A 513-amino-acid polypeptide reads, in one-letter code: GMP synthase [glutamine-hydrolyzing] (513 aa).

The Glutamine amidotransferase type-1 domain occupies 3–192; sequence TVVVLDYGSQ…VSKIAKMEKN (190 aa). The active-site Nucleophile is C80. Residues H166 and E168 contribute to the active site. In terms of domain architecture, GMPS ATP-PPase spans 193 to 388; sequence WEMKDFVSEK…LELPQSMINR (196 aa). 220 to 226 provides a ligand contact to ATP; the sequence is SGGVDSS.

In terms of assembly, homodimer.

The catalysed reaction is XMP + L-glutamine + ATP + H2O = GMP + L-glutamate + AMP + diphosphate + 2 H(+). Its pathway is purine metabolism; GMP biosynthesis; GMP from XMP (L-Gln route): step 1/1. In terms of biological role, catalyzes the synthesis of GMP from XMP. This Thermosipho melanesiensis (strain DSM 12029 / CIP 104789 / BI429) protein is GMP synthase [glutamine-hydrolyzing].